Consider the following 337-residue polypeptide: Putative 2-aminoethylphosphonate-binding periplasmic protein (337 aa).

An N-terminal signal peptide occupies residues 1-21 (MKLSRLALLSVFALASAPSWA).

The protein belongs to the bacterial solute-binding protein 1 family.

It localises to the periplasm. Functionally, probably part of the PhnSTUV complex (TC 3.A.1.11.5) involved in 2-aminoethylphosphonate import. This Salmonella paratyphi A (strain ATCC 9150 / SARB42) protein is Putative 2-aminoethylphosphonate-binding periplasmic protein (phnS).